A 308-amino-acid polypeptide reads, in one-letter code: Cytochrome b (308 aa).

The next 4 helical transmembrane spans lie at 1–21 (FGLL…LLAA), 45–66 (WLIR…YLHI), 81–101 (WNIG…GYVX), and 146–166 (FFAL…VHLT). Positions 51 and 65 each coordinate heme b. Positions 150 and 164 each coordinate heme b. His169 is an a ubiquinone binding site. 3 helical membrane-spanning segments follow: residues 194-214 (TKDV…ALFS), 256-276 (LGGV…PFLH), and 288-308 (LSQI…WVSN).

Belongs to the cytochrome b family. As to quaternary structure, the cytochrome bc1 complex contains 11 subunits: 3 respiratory subunits (MT-CYB, CYC1 and UQCRFS1), 2 core proteins (UQCRC1 and UQCRC2) and 6 low-molecular weight proteins (UQCRH/QCR6, UQCRB/QCR7, UQCRQ/QCR8, UQCR10/QCR9, UQCR11/QCR10 and a cleavage product of UQCRFS1). This cytochrome bc1 complex then forms a dimer. Heme b is required as a cofactor.

The protein localises to the mitochondrion inner membrane. Component of the ubiquinol-cytochrome c reductase complex (complex III or cytochrome b-c1 complex) that is part of the mitochondrial respiratory chain. The b-c1 complex mediates electron transfer from ubiquinol to cytochrome c. Contributes to the generation of a proton gradient across the mitochondrial membrane that is then used for ATP synthesis. The chain is Cytochrome b (MT-CYB) from Pomatostomus ruficeps (Chestnut-crowned babbler).